The primary structure comprises 1158 residues: Hephaestin (1158 aa).

Positions 1-23 are cleaved as a signal peptide; that stretch reads MESGHLLWALLFMQSLWPQLTDG. Plastocyanin-like domains follow at residues 24 to 206, 218 to 366, 370 to 560, 570 to 718, 731 to 903, and 911 to 1067; these read ATRV…LITC, QRQD…VKSC, PPVD…LLVC, KQKG…VSQC, AARI…LAIC, and HGGR…SRTE. At 24 to 1110 the chain is on the extracellular side; that stretch reads ATRVYYLGIR…PIKNVEMLAS (1087 aa). Residues Gly70 and Tyr73 each contribute to the Na(+) site. The Cu(2+) site is built by His126 and His128. His126 is an O2 binding site. Lys134, Asp152, and Asp153 together coordinate Ca(2+). The N-linked (GlcNAc...) asparagine glycan is linked to Asn164. The cysteines at positions 180 and 206 are disulfide-linked. Cu(2+)-binding residues include His186 and His188. His186 lines the O2 pocket. An N-linked (GlcNAc...) asparagine glycan is attached at Asn236. Residue Ser265 coordinates Na(+). A disulfide bridge connects residues Cys285 and Cys366. Cu(2+)-binding residues include His304, Cys347, and His352. Na(+)-binding residues include Phe416, Gly425, and Tyr428. A disulfide bridge connects residues Cys534 and Cys560. Asn588 is a glycosylation site (N-linked (GlcNAc...) asparagine). Residue Ser617 coordinates Na(+). A disulfide bridge connects residues Cys637 and Cys718. Cu(2+) is bound by residues His656, Cys699, His704, and Met709. N-linked (GlcNAc...) asparagine glycans are attached at residues Asn714 and Asn758. Na(+)-binding residues include Phe769 and Gly778. N-linked (GlcNAc...) asparagine glycosylation is found at Asn829 and Asn873. Cys877 and Cys903 are disulfide-bonded. Asn931 carries N-linked (GlcNAc...) asparagine glycosylation. His1000, His1003, His1005, His1045, Cys1046, His1047, His1051, and Met1056 together coordinate Cu(2+). 2 residues coordinate O2: His1003 and His1005. His1047 is an O2 binding site. Residues 1111–1131 form a helical membrane-spanning segment; sequence VLVAISVTLLLVVLALGGVVW. Topologically, residues 1132–1158 are cytoplasmic; the sequence is YQHRQRKLRRNRRSILDDSFKLLSFKQ. Phosphoserine occurs at positions 1145, 1150, and 1155.

It belongs to the multicopper oxidase family. As to quaternary structure, part of a complex composed of SLC40A1/ferroportin, TF/transferrin and HEPH/hephaestin that transfers iron from cells to transferrin. Requires Cu cation as cofactor. As to expression, expressed by intestinal absorptive cells (at protein level). Also detected in breast, colon, bone trabecular cells and fibroblasts.

Its subcellular location is the basolateral cell membrane. The catalysed reaction is 4 Fe(2+) + O2 + 4 H(+) = 4 Fe(3+) + 2 H2O. Plasma membrane ferroxidase that mediates the extracellular conversion of ferrous/Fe(2+) iron into its ferric/Fe(3+) form. Couples ferroportin which specifically exports ferrous/Fe(2+) iron from cells to transferrin that only binds and shuttles extracellular ferric/Fe(3+) iron throughout the body. By helping iron transfer from cells to blood mainly contributes to dietary iron absorption by the intestinal epithelium and more generally regulates iron levels in the body. The sequence is that of Hephaestin from Homo sapiens (Human).